Here is a 262-residue protein sequence, read N- to C-terminus: Spindlin-1 (262 aa).

The segment at 1–51 (MKTPFGKTPGQRSRADAGHAGVSANMMKKRTSHKKHRSSVGPSKPVSQPRR) is disordered. Residues Lys-7 and Lys-28 each participate in a glycyl lysine isopeptide (Lys-Gly) (interchain with G-Cter in SUMO2) cross-link. The segment covering 27 to 38 (MKKRTSHKKHRS) has biased composition (basic residues). Residue Lys-44 is modified to N6-acetyllysine; alternate. Lys-44 is covalently cross-linked (Glycyl lysine isopeptide (Lys-Gly) (interchain with G-Cter in SUMO2); alternate). The tudor-like domain 1 stretch occupies residues 53 to 116 (IVGCRIQHGW…RVSALEVLPD (64 aa)). The tract at residues 93–98 (GFDCVY) is histone H3K4me3 and H3R8me2a binding. 2 positions are modified to phosphoserine; by AURKA: Ser-109 and Ser-124. Positions 132–193 (MIGKAVEHMF…DYKEGDLRIM (62 aa)) are tudor-like domain 2. Residue Glu-142 is a region of interest, histone H3K4me3 and H3R8me2a binding. The residue at position 199 (Ser-199) is a Phosphoserine. The interval 213-262 (LVGKQVEYAKEDGSKRTGMVIHQVEAKPSVYFIKFDDDFHIYVYDLVKTS) is tudor-like domain 3. The histone H3K4me3 and H3R8me2a binding stretch occupies residues 250-252 (DFH).

It belongs to the SPIN/STSY family. As to quaternary structure, homodimer; may form higher-order oligomers. Interacts with TCF7L2/TCF4; the interaction is direct. Interacts with HABP4 and SERBP1. Interacts with SPINDOC; SPINDOC stabilizes SPIN1 and enhances its association with bivalent H3K4me3K9me3 mark. Interacts with SPOCD1; promoting recruitment of PIWIL4 and SPOCD1 to transposons. Phosphorylated during oocyte meiotic maturation. Highly expressed in ovarian cancer tissues.

It localises to the nucleus. The protein resides in the nucleolus. Functionally, chromatin reader that specifically recognizes and binds histone H3 both trimethylated at 'Lys-4' and 'Lys-9' (H3K4me3K9me3) and is involved in piRNA-mediated retrotransposon silencing during spermatogenesis. Plays a key role in the initiation of the PIWIL4-piRNA pathway, a pathway that directs transposon DNA methylation and silencing in the male embryonic germ cells, by promoting recruitment of DNA methylation machinery to transposons: binds young, but not old, LINE1 transposons, which are specifically marked with H3K4me3K9me3, and promotes the recruitment of PIWIL4 and SPOCD1 to transposons, leading to piRNA-directed DNA methylation. Also recognizes and binds histone H3 both trimethylated at 'Lys-4' and asymmetrically dimethylated at 'Arg-8' (H3K4me3 and H3R8me2a) and acts as an activator of Wnt signaling pathway downstream of PRMT2. In case of cancer, promotes cell cancer proliferation via activation of the Wnt signaling pathway. Overexpression induces metaphase arrest and chromosomal instability. Localizes to active rDNA loci and promotes the expression of rRNA genes. May play a role in cell-cycle regulation during the transition from gamete to embryo. Involved in oocyte meiotic resumption, a process that takes place before ovulation to resume meiosis of oocytes blocked in prophase I: may act by regulating maternal transcripts to control meiotic resumption. This chain is Spindlin-1, found in Homo sapiens (Human).